Here is a 284-residue protein sequence, read N- to C-terminus: 3-oxoadipate:acetyl-CoA acetyltransferase (284 aa).

3 residues coordinate Zn(2+): His-47, His-49, and Glu-229.

Belongs to the BKACE family. It depends on Zn(2+) as a cofactor.

The enzyme catalyses 3-oxoadipate + acetyl-CoA = acetoacetate + succinyl-CoA. Its function is as follows. Catalyzes the condensation of 3-oxoadipate (beta-ketoadipate) and acetyl-CoA, forming acetoacetate and succinyl-CoA. Is likely involved is the degradation of 3-oxoadipate through an alternative pathway, within catechol degradation. The sequence is that of 3-oxoadipate:acetyl-CoA acetyltransferase from Cupriavidus necator (strain ATCC 17699 / DSM 428 / KCTC 22496 / NCIMB 10442 / H16 / Stanier 337) (Ralstonia eutropha).